The sequence spans 58 residues: SPbeta prophage-derived uncharacterized protein YonT (58 aa).

A helical membrane pass occupies residues 6–26; it reads GIVVAFLISLTVLTINSLTIV. The disordered stretch occupies residues 35 to 58; that stretch reads GTSKKKKRIRKRLRPKRQRQRIRR. Basic residues predominate over residues 36–58; it reads TSKKKKRIRKRLRPKRQRQRIRR.

The protein localises to the cell membrane. The chain is SPbeta prophage-derived uncharacterized protein YonT (yonT) from Bacillus subtilis (strain 168).